The sequence spans 72 residues: Translation initiation factor IF-1 (72 aa).

The S1-like domain occupies 1–72 (MAKEDTIQMQ…TRARIVFRAR (72 aa)).

It belongs to the IF-1 family. In terms of assembly, component of the 30S ribosomal translation pre-initiation complex which assembles on the 30S ribosome in the order IF-2 and IF-3, IF-1 and N-formylmethionyl-tRNA(fMet); mRNA recruitment can occur at any time during PIC assembly.

Its subcellular location is the cytoplasm. Its function is as follows. One of the essential components for the initiation of protein synthesis. Stabilizes the binding of IF-2 and IF-3 on the 30S subunit to which N-formylmethionyl-tRNA(fMet) subsequently binds. Helps modulate mRNA selection, yielding the 30S pre-initiation complex (PIC). Upon addition of the 50S ribosomal subunit IF-1, IF-2 and IF-3 are released leaving the mature 70S translation initiation complex. This Neisseria gonorrhoeae (strain ATCC 700825 / FA 1090) protein is Translation initiation factor IF-1.